An 86-amino-acid chain; its full sequence is UPF0297 protein SH1302 (86 aa).

Belongs to the UPF0297 family.

This Staphylococcus haemolyticus (strain JCSC1435) protein is UPF0297 protein SH1302.